Here is a 573-residue protein sequence, read N- to C-terminus: ATP-dependent RNA helicase RhlB (573 aa).

The short motif at 9 to 37 (VTFSSFDLHPALIAGLESAGFTRCTPIQA) is the Q motif element. The 181-residue stretch at 40–220 (LPVALPGGDV…YEHMNEPEKL (181 aa)) folds into the Helicase ATP-binding domain. 53 to 60 (AQTGTGKT) serves as a coordination point for ATP. Positions 166 to 169 (DEAD) match the DEAD box motif. The region spanning 231 to 393 (RVRQRIYFPS…PVTSELLTPL (163 aa)) is the Helicase C-terminal domain. The segment at 391–560 (TPLPRAPRVP…KPSGSPSLLS (170 aa)) is disordered. A compositionally biased stretch (acidic residues) spans 402–411 (EGEEADDDAG). Basic and acidic residues predominate over residues 419–432 (REAREQRAAEEQRR). Over residues 435–450 (GRSGSGGSRSGSGGGG) the composition is skewed to gly residues. The span at 451 to 462 (GRREGAGADGKP) shows a compositional bias: basic and acidic residues. Residues 484–499 (PVVAAAAGQAPSAGVA) are compositionally biased toward low complexity. Positions 505 to 514 (PRKRRRRRNG) are enriched in basic residues. Positions 541 to 560 (VVAKPVRAAAKPSGSPSLLS) are enriched in low complexity.

This sequence belongs to the DEAD box helicase family. RhlB subfamily. Component of the RNA degradosome, which is a multiprotein complex involved in RNA processing and mRNA degradation.

Its subcellular location is the cytoplasm. The enzyme catalyses ATP + H2O = ADP + phosphate + H(+). DEAD-box RNA helicase involved in RNA degradation. Has RNA-dependent ATPase activity and unwinds double-stranded RNA. This chain is ATP-dependent RNA helicase RhlB, found in Xanthomonas euvesicatoria pv. vesicatoria (strain 85-10) (Xanthomonas campestris pv. vesicatoria).